The primary structure comprises 508 residues: MAP kinase kinase MKK1/SSP32 (508 aa).

Disordered regions lie at residues 1–21, 35–95, and 130–158; these read MASLFRPPESAKCNPNSPRLK, IYLT…LSIN, and ELSGNSDLTPSSMASPFSHTNTSSPYLRN. Residues 35–47 show a composition bias toward polar residues; that stretch reads IYLTSNGSSTTAY. A compositionally biased stretch (low complexity) spans 48 to 66; sequence SSHTPEPLTSSTSTLFSQT. Polar residues-rich tracts occupy residues 67–79 and 131–158; these read RLHPSDSSMTLNT and LSGNSDLTPSSMASPFSHTNTSSPYLRN. At serine 192 the chain carries Phosphoserine. One can recognise a Protein kinase domain in the interval 221–488; it reads IETLGILGEG…PRQMINHPWI (268 aa). Residues 227–235 and lysine 250 contribute to the ATP site; that span reads LGEGAGGSV. Aspartate 349 (proton acceptor) is an active-site residue.

It belongs to the protein kinase superfamily. STE Ser/Thr protein kinase family. MAP kinase kinase subfamily.

The enzyme catalyses L-seryl-[protein] + ATP = O-phospho-L-seryl-[protein] + ADP + H(+). It carries out the reaction L-threonyl-[protein] + ATP = O-phospho-L-threonyl-[protein] + ADP + H(+). It catalyses the reaction L-tyrosyl-[protein] + ATP = O-phospho-L-tyrosyl-[protein] + ADP + H(+). Functionally, involved in a signal transduction pathway that play a role in yeast cell morphogenesis and cell growth. This pathway seems to start by SMP3; then involve the kinase PKC1 that may act on the BCK1 kinase that then phosphorylates MKK1 and MKK2 which themselves phosphorylate the MPK1 kinase. The chain is MAP kinase kinase MKK1/SSP32 (MKK1) from Saccharomyces cerevisiae (strain ATCC 204508 / S288c) (Baker's yeast).